The primary structure comprises 78 residues: MKITYRKSAIGYSRDQKATIRSLGLRRLNSVVIHDDTPTIRGMVFKVRHLVSVEEIADDTSPDAETGADLERDGGNRS.

Acidic residues predominate over residues 58-68 (DDTSPDAETGA). Positions 58–78 (DDTSPDAETGADLERDGGNRS) are disordered. Over residues 69 to 78 (DLERDGGNRS) the composition is skewed to basic and acidic residues.

The protein belongs to the universal ribosomal protein uL30 family. In terms of assembly, part of the 50S ribosomal subunit.

The protein is Large ribosomal subunit protein uL30 of Roseiflexus sp. (strain RS-1).